A 277-amino-acid polypeptide reads, in one-letter code: Caspase-3 (277 aa).

At M1 the chain carries N-acetylmethionine. 2 consecutive propeptides follow at residues 1–9 (MENTENSVD) and 10–28 (SKSI…ESMD). An N6-acetyllysine modification is found at K11. The residue at position 26 (S26) is a Phosphoserine. Catalysis depends on residues H121 and C163. An S-nitrosocysteine; in inhibited form modification is found at C163. R207 carries the post-translational modification (Microbial infection) ADP-riboxanated arginine.

Belongs to the peptidase C14A family. In terms of assembly, heterotetramer that consists of two anti-parallel arranged heterodimers, each one formed by a 17 kDa (p17) and a 12 kDa (p12) subunit. Interacts with BIRC6/bruce. Cleavage by granzyme B, caspase-6, caspase-8 and caspase-10 generates the two active subunits. Additional processing of the propeptides is likely due to the autocatalytic activity of the activated protease. Active heterodimers between the small subunit of caspase-7 protease and the large subunit of caspase-3 also occur and vice versa. Post-translationally, S-nitrosylated on its catalytic site cysteine in unstimulated human cell lines and denitrosylated upon activation of the Fas apoptotic pathway, associated with an increase in intracellular caspase activity. Fas therefore activates caspase-3 not only by inducing the cleavage of the caspase zymogen to its active subunits, but also by stimulating the denitrosylation of its active site thiol. In terms of processing, ubiquitinated by BIRC6; this activity is inhibited by DIABLO/SMAC. (Microbial infection) ADP-riboxanation by C.violaceum CopC blocks CASP3 processing, preventing CASP3 activation and ability to recognize and cleave substrates. In terms of tissue distribution, highly expressed in lung, spleen, heart, liver and kidney. Moderate levels in brain and skeletal muscle, and low in testis. Also found in many cell lines, highest expression in cells of the immune system.

It is found in the cytoplasm. The enzyme catalyses Strict requirement for an Asp residue at positions P1 and P4. It has a preferred cleavage sequence of Asp-Xaa-Xaa-Asp-|- with a hydrophobic amino-acid residue at P2 and a hydrophilic amino-acid residue at P3, although Val or Ala are also accepted at this position.. With respect to regulation, inhibited by isatin sulfonamides. Inhibited by BIRC6; following inhibition of BIRC6-caspase binding by DIABLO/SMAC, BIRC6 is subjected to caspase cleavage, leading to an increase in active caspases. Its function is as follows. Thiol protease that acts as a major effector caspase involved in the execution phase of apoptosis. Following cleavage and activation by initiator caspases (CASP8, CASP9 and/or CASP10), mediates execution of apoptosis by catalyzing cleavage of many proteins. At the onset of apoptosis, it proteolytically cleaves poly(ADP-ribose) polymerase PARP1 at a '216-Asp-|-Gly-217' bond. Cleaves and activates sterol regulatory element binding proteins (SREBPs) between the basic helix-loop-helix leucine zipper domain and the membrane attachment domain. Cleaves and activates caspase-6, -7 and -9 (CASP6, CASP7 and CASP9, respectively). Cleaves and inactivates interleukin-18 (IL18). Involved in the cleavage of huntingtin. Triggers cell adhesion in sympathetic neurons through RET cleavage. Cleaves and inhibits serine/threonine-protein kinase AKT1 in response to oxidative stress. Acts as an inhibitor of type I interferon production during virus-induced apoptosis by mediating cleavage of antiviral proteins CGAS, IRF3 and MAVS, thereby preventing cytokine overproduction. Also involved in pyroptosis by mediating cleavage and activation of gasdermin-E (GSDME). Cleaves XRCC4 and phospholipid scramblase proteins XKR4, XKR8 and XKR9, leading to promote phosphatidylserine exposure on apoptotic cell surface. Cleaves BIRC6 following inhibition of BIRC6-caspase binding by DIABLO/SMAC. The protein is Caspase-3 (CASP3) of Homo sapiens (Human).